The sequence spans 186 residues: MSRLSIFPDHGDGGDGALPLPKLVCNDPASIQAELADRCVGFEQWPAAHALPPDADQSTILTTYASEVARVQRDGGYQTVDAIRMTPDHPEREALRNKFLSEHTHAEDEVRFFVEGQGLFSLHIDKEVLVTLCERGDLISVPAGTRHWFDMGPTPSFCALRFFNNSEGWVATFTGDSIAERFPRLD.

Fe(2+) is bound by residues histidine 103, histidine 105, glutamate 109, and histidine 147. 4 residues coordinate Ni(2+): histidine 103, histidine 105, glutamate 109, and histidine 147.

The protein belongs to the acireductone dioxygenase (ARD) family. In terms of assembly, monomer. It depends on Fe(2+) as a cofactor. The cofactor is Ni(2+).

The catalysed reaction is 1,2-dihydroxy-5-(methylsulfanyl)pent-1-en-3-one + O2 = 3-(methylsulfanyl)propanoate + CO + formate + 2 H(+). The enzyme catalyses 1,2-dihydroxy-5-(methylsulfanyl)pent-1-en-3-one + O2 = 4-methylsulfanyl-2-oxobutanoate + formate + 2 H(+). It participates in amino-acid biosynthesis; L-methionine biosynthesis via salvage pathway; L-methionine from S-methyl-5-thio-alpha-D-ribose 1-phosphate: step 5/6. In terms of biological role, catalyzes 2 different reactions between oxygen and the acireductone 1,2-dihydroxy-3-keto-5-methylthiopentene (DHK-MTPene) depending upon the metal bound in the active site. Fe-containing acireductone dioxygenase (Fe-ARD) produces formate and 2-keto-4-methylthiobutyrate (KMTB), the alpha-ketoacid precursor of methionine in the methionine recycle pathway. Ni-containing acireductone dioxygenase (Ni-ARD) produces methylthiopropionate, carbon monoxide and formate, and does not lie on the methionine recycle pathway. This Parasynechococcus marenigrum (strain WH8102) protein is Acireductone dioxygenase.